The sequence spans 107 residues: Quaternary ammonium compound-resistance protein QacH (107 aa).

The next 4 helical transmembrane spans lie at 1 to 21 (MPYL…AFLK), 26 to 46 (FSKL…FYFL), 57 to 77 (ITYA…SVLI), and 84 to 104 (LISI…NTFG).

It belongs to the drug/metabolite transporter (DMT) superfamily. Small multidrug resistance (SMR) (TC 2.A.7.1) family.

Its subcellular location is the cell membrane. In terms of biological role, multidrug exporter. Is implicated for the resistance to bacteriocidal quaternary ammonium compounds. This Staphylococcus saprophyticus protein is Quaternary ammonium compound-resistance protein QacH (qacH).